A 257-amino-acid polypeptide reads, in one-letter code: NAD-capped RNA hydrolase NudC (257 aa).

Residues Lys25 and Arg69 each coordinate substrate. Cys98 and Cys101 together coordinate Zn(2+). Glu111 lines the substrate pocket. Cys116 and Cys119 together coordinate Zn(2+). A substrate-binding site is contributed by Tyr124. The Nudix hydrolase domain maps to 125 to 248 (PQIAPCIIVA…TVARRLIEDT (124 aa)). 3 residues coordinate a divalent metal cation: Ala158, Glu174, and Glu178. Residues 159 to 180 (GFVEVGETLEQAVAREVMEESG) carry the Nudix box motif. 192 to 199 (QPWPFPQS) provides a ligand contact to substrate. Residue Glu219 participates in a divalent metal cation binding. Ala241 is a substrate binding site.

Belongs to the Nudix hydrolase family. NudC subfamily. Homodimer. Mg(2+) serves as cofactor. The cofactor is Mn(2+). Zn(2+) is required as a cofactor.

It carries out the reaction a 5'-end NAD(+)-phospho-ribonucleoside in mRNA + H2O = a 5'-end phospho-adenosine-phospho-ribonucleoside in mRNA + beta-nicotinamide D-ribonucleotide + 2 H(+). The catalysed reaction is NAD(+) + H2O = beta-nicotinamide D-ribonucleotide + AMP + 2 H(+). It catalyses the reaction NADH + H2O = reduced beta-nicotinamide D-ribonucleotide + AMP + 2 H(+). MRNA decapping enzyme that specifically removes the nicotinamide adenine dinucleotide (NAD) cap from a subset of mRNAs by hydrolyzing the diphosphate linkage to produce nicotinamide mononucleotide (NMN) and 5' monophosphate mRNA. The NAD-cap is present at the 5'-end of some mRNAs and stabilizes RNA against 5'-processing. Has preference for mRNAs with a 5'-end purine. Catalyzes the hydrolysis of a broad range of dinucleotide pyrophosphates. This chain is NAD-capped RNA hydrolase NudC, found in Escherichia coli (strain 55989 / EAEC).